The sequence spans 701 residues: Glycine--tRNA ligase beta subunit (701 aa).

It belongs to the class-II aminoacyl-tRNA synthetase family. In terms of assembly, tetramer of two alpha and two beta subunits.

Its subcellular location is the cytoplasm. The catalysed reaction is tRNA(Gly) + glycine + ATP = glycyl-tRNA(Gly) + AMP + diphosphate. This Anaeromyxobacter dehalogenans (strain 2CP-C) protein is Glycine--tRNA ligase beta subunit.